The chain runs to 214 residues: Transcriptional activator protein ExaE (214 aa).

The 117-residue stretch at 2-118 folds into the Response regulatory domain; that stretch reads GILLVDDHPM…VVLEAVRRVL (117 aa). Aspartate 53 is subject to 4-aspartylphosphate. One can recognise an HTH luxR-type domain in the interval 143 to 208; it reads GNARLQGLTQ…ELVHLAIEAG (66 aa). A DNA-binding region (H-T-H motif) is located at residues 167-186; the sequence is TRLIAQQLCISAKTVSNYLT.

Functionally, positive regulator of the expression of the gene qedA and the activity of ADH I but does not affect the activities of ADH IIB or ADH IIG. The chain is Transcriptional activator protein ExaE from Pseudomonas putida (Arthrobacter siderocapsulatus).